A 445-amino-acid polypeptide reads, in one-letter code: Damage suppressor protein (445 aa).

Composition is skewed to polar residues over residues 1-15 (MAST…SSTG) and 25-47 (SQGS…SATS). Disordered stretches follow at residues 1 to 145 (MAST…HSVI) and 203 to 445 (YHSV…RKRK). Low complexity predominate over residues 61 to 73 (SSTTAGSSSTQGQ). A compositionally biased stretch (polar residues) spans 74 to 87 (KFSTTPTDPKTFSS). Positions 88 to 97 (DQKEKSKSPA) are enriched in basic and acidic residues. Positions 117 to 138 (DAKSSGQSQGQSKDSGKSSSDS) are enriched in low complexity. Positions 207–228 (VGDKTDDKKEGEHSGDKKDDSK) are enriched in basic and acidic residues. The segment at 208–445 (GDKTDDKKEG…GGKAGGRKRK (238 aa)) is required and sufficient for DNA-binding and co-localization with nuclear DNA. Over residues 245 to 256 (ETSGQAESSSGN) the composition is skewed to polar residues. Residues 257 to 306 (EGAAPAKGRGRGRPPAAAKGVAKGAAKGAAASKGAKSGAESSKGGEQSSG) are compositionally biased toward low complexity. Residues 329-338 (GEGGASGSEG) are compositionally biased toward gly residues. The tract at residues 360–445 (EPPRRSSRLT…GGKAGGRKRK (86 aa)) is required for nucleosome binding and for the protection of chromatin from hydroxyl radical-mediated DNA damage. Residues 367–431 (RLTSSGTGAG…ASKAPQNGAG (65 aa)) are compositionally biased toward low complexity. Residues 432–445 (AKKKGGKAGGRKRK) are compositionally biased toward basic residues.

The protein localises to the nucleus. Unique chromatin-associating protein that contributes to the organism's exceptional tolerance to harsh environmental stresses. Binds with a higher affinity to nucleosomes than to free DNA. Protects chromatin from damage caused by hydroxyl radical-mediated cleavage induced by X-rays or treatment with hydrogen peroxide. Suppresses X-ray-induced DNA damage that includes single-strand breaks (SSBs) as well as more hazardous double-strand breaks (DSBs), and improves radiotolerance. Also shields DNA against reactive oxygen species (ROS). This is Damage suppressor protein from Ramazzottius varieornatus (Water bear).